Here is a 557-residue protein sequence, read N- to C-terminus: Hyaluronan synthase 3 (557 aa).

At 1–10 (MPGKFQTGLR) the chain is on the cytoplasmic side. Residues 11–31 (VLATCLFALLVLGGILVAYVT) form a helical membrane-spanning segment. The Extracellular segment spans residues 32 to 44 (GYQFIHTDRHHLS). Residues 45–65 (FGLYGAILGLHLLSQSLFAFL) traverse the membrane as a helical segment. The Cytoplasmic portion of the chain corresponds to 66–367 (EHRKMRGGGR…NALWFHKHHL (302 aa)). Residues 368–388 (WMTYESVVTGFFPFFLVATVV) traverse the membrane as a helical segment. At 389 to 398 (QLFYRGRVWN) the chain is on the extracellular side. Residues 399-419 (ILLFLLTVQLVGILKATYACI) form a helical membrane-spanning segment. Residues 420–430 (LRGNAEMIFMS) are Cytoplasmic-facing. A helical transmembrane segment spans residues 431–451 (LYSLLYMTSLLPAKIFAVITI). Topologically, residues 452–463 (KKSGWGTSGRRK) are extracellular. A helical membrane pass occupies residues 464–484 (LVVNFMGMVPVSVWFCILLGG). Topologically, residues 485 to 501 (LVYTAYCQSHDPFTETE) are cytoplasmic. Residues 502 to 522 (LLFLLTGAILYGCYWVALLSL) form a helical membrane-spanning segment. The Extracellular portion of the chain corresponds to 523–557 (YLALIARRCGKRQELYNLALEEVSEPEPAAKAIKP).

This sequence belongs to the NodC/HAS family. Mg(2+) serves as cofactor. In terms of processing, O-GlcNAcylation increases the hyaluronan synthase activity, HAS3 stability and its plasma membrane residence. The concentration of UDP-GlcNAc controls the level of O-GlcNAc modification.

The protein resides in the cell membrane. Its subcellular location is the golgi apparatus membrane. It is found in the golgi apparatus. It localises to the trans-Golgi network membrane. The protein localises to the cytoplasmic vesicle. The enzyme catalyses [hyaluronan](n) + UDP-N-acetyl-alpha-D-glucosamine = N-acetyl-beta-D-glucosaminyl-(1-&gt;4)-[hyaluronan](n) + UDP + H(+). It catalyses the reaction N-acetyl-beta-D-glucosaminyl-(1-&gt;4)-[hyaluronan](n) + UDP-alpha-D-glucuronate = [hyaluronan](n+1) + UDP + H(+). Its pathway is glycan biosynthesis; hyaluronan biosynthesis. Functionally, catalyzes the addition of GlcNAc or GlcUA monosaccharides to the nascent hyaluronan polymer. Therefore, it is essential to hyaluronan synthesis a major component of most extracellular matrices that has a structural role in tissues architectures and regulates cell adhesion, migration and differentiation. This is one of three isoenzymes responsible for cellular hyaluronan synthesis. The sequence is that of Hyaluronan synthase 3 (has3) from Xenopus laevis (African clawed frog).